The chain runs to 1050 residues: Zinc finger and BTB domain-containing protein 11 (1050 aa).

Residues 143–156 (LDSGEESNESEDDL) show a composition bias toward acidic residues. The interval 143–173 (LDSGEESNESEDDLSNFTSPPSTASKSSKKK) is disordered. Residues 157–168 (SNFTSPPSTASK) show a composition bias toward low complexity. In terms of domain architecture, BTB spans 214-282 (CDVTLLIEGE…AYTSVLSFDF (69 aa)). Disordered regions lie at residues 373 to 514 (AEQN…EGGY) and 543 to 563 (LVQR…STEE). Low complexity predominate over residues 378–399 (EPEQQPAPQASPEAEASVSPVE). 2 stretches are compositionally biased toward basic and acidic residues: residues 478-501 (SKDE…DTYR) and 553-563 (PKRDAKESTEE). 2 C2H2-type zinc fingers span residues 566–588 (HKCG…TLKH) and 594–616 (YKCP…LIRH). The tract at residues 617–641 (TRKEAPTSSSSNSTSTEASGGSSEK) is disordered. The span at 623–638 (TSSSSNSTSTEASGGS) shows a compositional bias: low complexity. C2H2-type zinc fingers lie at residues 648-670 (FICS…MLKH), 676-698 (HACQ…QSLH), 704-726 (FQCE…MSIH), 732-754 (YFCS…LKKH), 763-785 (YHCT…MNKH), 791-813 (FQCQ…VKSH), 819-843 (YRCN…KATH), 855-877 (RVCD…MNNH), 883-905 (FECL…VRTH), and 911-934 (YVCP…TKFH).

It is found in the nucleus. The protein localises to the nucleolus. Its function is as follows. May be involved in transcriptional regulation. The polypeptide is Zinc finger and BTB domain-containing protein 11 (Mus musculus (Mouse)).